The chain runs to 158 residues: NAD(P)H-quinone oxidoreductase subunit O, chloroplastic (158 aa).

The N-terminal 38 residues, 1–38 (MAFSATVSQLSSLSTISSSLPISSRRLPHRSLPQFTVK), are a transit peptide targeting the chloroplast. Residues 33 to 70 (PQFTVKAEAEKEKQSTQGKSDGEASPAATKTPKTLPKK) form a disordered region. Low complexity predominate over residues 56–70 (ASPAATKTPKTLPKK).

It belongs to the NDH complex subunit O family. In terms of assembly, part of the chloroplast NDH complex, composed of a mixture of chloroplast and nucleus encoded subunits. Component of the NDH subcomplex A, at least composed of ndhH, ndhI, ndhJ, ndhK, ndhL, ndhM, ndhN and ndhO.

The protein localises to the plastid. Its subcellular location is the chloroplast thylakoid membrane. It catalyses the reaction a plastoquinone + NADH + (n+1) H(+)(in) = a plastoquinol + NAD(+) + n H(+)(out). It carries out the reaction a plastoquinone + NADPH + (n+1) H(+)(in) = a plastoquinol + NADP(+) + n H(+)(out). Its function is as follows. NDH shuttles electrons from NAD(P)H:plastoquinone, via FMN and iron-sulfur (Fe-S) centers, to quinones in the photosynthetic chain and possibly in a chloroplast respiratory chain. The immediate electron acceptor for the enzyme in this species is believed to be plastoquinone. Couples the redox reaction to proton translocation, and thus conserves the redox energy in a proton gradient. The protein is NAD(P)H-quinone oxidoreductase subunit O, chloroplastic of Arabidopsis thaliana (Mouse-ear cress).